The primary structure comprises 135 residues: Lysozyme 2 (135 aa).

An N-terminal signal peptide occupies residues 1 to 18; it reads MNFLILFCVVASASVVYS. An I-type lysozyme domain is found at 19 to 135; sequence SISDQCLRCI…WRLVQAKGCS (117 aa). Cystine bridges form between Cys24–Cys100, Cys29–Cys35, Cys40–Cys49, Cys62–Cys82, Cys72–Cys78, and Cys96–Cys114. Glu32 serves as the catalytic Proton donor. The Nucleophile role is filled by Asp43. 55–61 is a binding site for substrate; that stretch reads KQGYWTD. Residues Tyr86 and 107-109 contribute to the substrate site; that span reads HNG.

Expressed in the epithelia of the basophil cells in the digestive tubules, but not in the epithelial cells lining the digestive ducts and stomach. Expressed at a much lower level in the style sac-midgut tissues. No expression detected in mantle, gills, labial palps or hemocytes.

It localises to the secreted. It carries out the reaction Hydrolysis of (1-&gt;4)-beta-linkages between N-acetylmuramic acid and N-acetyl-D-glucosamine residues in a peptidoglycan and between N-acetyl-D-glucosamine residues in chitodextrins.. Activity decreased by 80% by addition of 0.01 M calcium, zinc or magnesium. Activity only decreased by 17% by addition of ammonium, and by 2% by addition of sodium. In terms of biological role, the main role of this lysozyme is in digestion. Has antibacterial activity against the Gram-positive bacterium P.cerevisiae and the Gram-negative bacteria E.coli and V.vulnificus. Shows some chitinase activity but no isopeptidase activity. The polypeptide is Lysozyme 2 (Crassostrea virginica (Eastern oyster)).